A 267-amino-acid chain; its full sequence is Putative F-box protein At1g61060 (267 aa).

Residues 15–63 (DYFDAIHVDLFTAKILSKLPVKSIAQCRCVSKLWSSQIRRPYYNMLFPI) form the F-box domain.

The chain is Putative F-box protein At1g61060 from Arabidopsis thaliana (Mouse-ear cress).